The chain runs to 571 residues: uncharacterized protein (571 aa).

5 helical membrane-spanning segments follow: residues 10–29 (VRLHPELALFAAIVFGHFIG), 36–55 (VSLGTVVGTLIAGMILGLLF), 65–87 (WAFFDLFLFAVGYSAGPQFFASL), 96–118 (ALAVVVSCTGLAAAIAMVALFRF), and 166–188 (ATTYIFGEVGLILFVTVVAPRLL). The RCK C-terminal domain maps to 294-378 (TEVDDQELLS…IATAARNLGF (85 aa)). 6 helical membrane passes run 388–406 (LVYLAGGVVVGILFGLLQV), 411–433 (VPLGLGTSGGVLVVGLVAGWLYS), 446–465 (LRLLSDVGLIVFIAAIGLAA), 480–502 (LFAKLVGAGVVVTLAGPIAGLLL), 509–531 (LPPVALLPGIAGAQTTVATLNAL), and 546–568 (VPFAVSNVLITLWGPVIVACAVA).

Belongs to the AAE transporter (TC 2.A.81) family.

It localises to the cell membrane. This is an uncharacterized protein from Bordetella parapertussis (strain 12822 / ATCC BAA-587 / NCTC 13253).